The primary structure comprises 322 residues: Phosphatidylglycerol--prolipoprotein diacylglyceryl transferase (322 aa).

3 helical membrane passes run 23–43 (VYPI…AFFW), 53–73 (FFAL…LWFV), and 97–117 (GLSI…YIYF). A 1,2-diacyl-sn-glycero-3-phospho-(1'-sn-glycerol) is bound at residue Arg143. A run of 2 helical transmembrane segments spans residues 191-211 (PLFL…VWII) and 250-270 (LAAM…EIWA).

It belongs to the Lgt family.

The protein localises to the cell membrane. It catalyses the reaction L-cysteinyl-[prolipoprotein] + a 1,2-diacyl-sn-glycero-3-phospho-(1'-sn-glycerol) = an S-1,2-diacyl-sn-glyceryl-L-cysteinyl-[prolipoprotein] + sn-glycerol 1-phosphate + H(+). It functions in the pathway protein modification; lipoprotein biosynthesis (diacylglyceryl transfer). In terms of biological role, catalyzes the transfer of the diacylglyceryl group from phosphatidylglycerol to the sulfhydryl group of the N-terminal cysteine of a prolipoprotein, the first step in the formation of mature lipoproteins. The polypeptide is Phosphatidylglycerol--prolipoprotein diacylglyceryl transferase (Mycoplasmopsis pulmonis (strain UAB CTIP) (Mycoplasma pulmonis)).